The primary structure comprises 420 residues: ATP phosphoribosyltransferase regulatory subunit (420 aa).

The protein belongs to the class-II aminoacyl-tRNA synthetase family. HisZ subfamily. As to quaternary structure, heteromultimer composed of HisG and HisZ subunits.

It localises to the cytoplasm. Its pathway is amino-acid biosynthesis; L-histidine biosynthesis; L-histidine from 5-phospho-alpha-D-ribose 1-diphosphate: step 1/9. Functionally, required for the first step of histidine biosynthesis. May allow the feedback regulation of ATP phosphoribosyltransferase activity by histidine. The chain is ATP phosphoribosyltransferase regulatory subunit from Bacillus cereus (strain AH820).